The primary structure comprises 167 residues: Keratin-associated protein 1-3 (167 aa).

This sequence belongs to the KRTAP type 1 family. As to quaternary structure, interacts with hair keratins. Expressed in the middle/upper portions of the hair cortex, in the region termed the keratogenous zone.

Its function is as follows. In the hair cortex, hair keratin intermediate filaments are embedded in an interfilamentous matrix, consisting of hair keratin-associated proteins (KRTAP), which are essential for the formation of a rigid and resistant hair shaft through their extensive disulfide bond cross-linking with abundant cysteine residues of hair keratins. The matrix proteins include the high-sulfur and high-glycine-tyrosine keratins. This is Keratin-associated protein 1-3 (KRTAP1-3) from Homo sapiens (Human).